A 545-amino-acid polypeptide reads, in one-letter code: ATP synthase subunit alpha (545 aa).

G173–S180 contacts ATP.

Belongs to the ATPase alpha/beta chains family. As to quaternary structure, F-type ATPases have 2 components, CF(1) - the catalytic core - and CF(0) - the membrane proton channel. CF(1) has five subunits: alpha(3), beta(3), gamma(1), delta(1), epsilon(1). CF(0) has three main subunits: a(1), b(2) and c(9-12). The alpha and beta chains form an alternating ring which encloses part of the gamma chain. CF(1) is attached to CF(0) by a central stalk formed by the gamma and epsilon chains, while a peripheral stalk is formed by the delta and b chains.

The protein localises to the cell membrane. It carries out the reaction ATP + H2O + 4 H(+)(in) = ADP + phosphate + 5 H(+)(out). Functionally, produces ATP from ADP in the presence of a proton gradient across the membrane. The alpha chain is a regulatory subunit. The polypeptide is ATP synthase subunit alpha (Arthrobacter sp. (strain FB24)).